Reading from the N-terminus, the 217-residue chain is MNQSLLAPFGTAIERVEAGLNALRQGQGVLVVDDEDRENEGDLIFAAETLTNAQMAMLIRECSGIVCLCLPDEKIKALELPAMVEHNSSQYGTAFTVSIEATVGVTTGVSAADRVTTIKAAIADNAKPSDLARPGHVYPLRAQPGGVLTRRGHTEGTIDLVQLAGLKPAGVLCEVTNPDGTMARLPEIIAFGALHNMPVLTIEDIVVYRKSLLAKVG.

D-ribulose 5-phosphate contacts are provided by residues 37–38 (RE), Asp42, 150–154 (RRGHT), and Glu174. Mg(2+) is bound at residue Glu38. A Mg(2+)-binding site is contributed by His153.

The protein belongs to the DHBP synthase family. Homodimer. The cofactor is Mg(2+). It depends on Mn(2+) as a cofactor.

It carries out the reaction D-ribulose 5-phosphate = (2S)-2-hydroxy-3-oxobutyl phosphate + formate + H(+). It functions in the pathway cofactor biosynthesis; riboflavin biosynthesis; 2-hydroxy-3-oxobutyl phosphate from D-ribulose 5-phosphate: step 1/1. In terms of biological role, catalyzes the conversion of D-ribulose 5-phosphate to formate and 3,4-dihydroxy-2-butanone 4-phosphate. The sequence is that of 3,4-dihydroxy-2-butanone 4-phosphate synthase from Shewanella baltica (strain OS155 / ATCC BAA-1091).